The primary structure comprises 279 residues: NAD kinase (279 aa).

Residue Asp57 is the Proton acceptor of the active site. Residues 57–58 (DG), 133–134 (NE), Arg159, Asp161, and 172–177 (TAYNKS) contribute to the NAD(+) site.

Belongs to the NAD kinase family. It depends on a divalent metal cation as a cofactor.

It localises to the cytoplasm. The enzyme catalyses NAD(+) + ATP = ADP + NADP(+) + H(+). Its function is as follows. Involved in the regulation of the intracellular balance of NAD and NADP, and is a key enzyme in the biosynthesis of NADP. Catalyzes specifically the phosphorylation on 2'-hydroxyl of the adenosine moiety of NAD to yield NADP. This chain is NAD kinase, found in Streptococcus pyogenes serotype M28 (strain MGAS6180).